The chain runs to 803 residues: Leucine--tRNA ligase (803 aa).

Positions 40 to 51 (PYPSGAGLHVGH) match the 'HIGH' region motif. The 'KMSKS' region motif lies at 575 to 579 (KMSKS). Residue K578 coordinates ATP.

This sequence belongs to the class-I aminoacyl-tRNA synthetase family.

It is found in the cytoplasm. The catalysed reaction is tRNA(Leu) + L-leucine + ATP = L-leucyl-tRNA(Leu) + AMP + diphosphate. The chain is Leucine--tRNA ligase from Listeria monocytogenes serovar 1/2a (strain ATCC BAA-679 / EGD-e).